The primary structure comprises 1827 residues: Sucrase-isomaltase, intestinal (1827 aa).

Topologically, residues 2-12 are cytoplasmic; sequence AKRKFSGLEIT. At Ser7 the chain carries Phosphoserine; by PKA. Residues 13–32 form a helical; Signal-anchor for type II membrane protein membrane-spanning segment; sequence LIVLFVIVFIIAIALIAVLA. Topologically, residues 33–1827 are lumenal; that stretch reads TKTPAVEEVN…LDDPIEISWS (1795 aa). The segment at 39–64 is disordered; that stretch reads EEVNPSSSTPTTTSTTTSTSGSVSCP. The segment covering 43–64 has biased composition (low complexity); the sequence is PSSSTPTTTSTTTSTSGSVSCP. Residues 61–110 form the P-type 1 domain; that stretch reads VSCPSELNEVVNERINCIPEQSPTQAICAQRNCCWRPWNNSDIPWCFFVD. Disulfide bonds link Cys63-Cys94, Cys77-Cys93, and Cys88-Cys106. Asn99 carries N-linked (GlcNAc...) asparagine glycosylation. Residues 110–1007 form an isomaltase region; the sequence is DNHGYNVEGM…DLQLNPTRTR (898 aa). 2 residues coordinate substrate: Asp264 and Asp388. A sulfotyrosine mark is found at Tyr391 and Tyr400. Asn455 carries an N-linked (GlcNAc...) asparagine glycan. Catalysis depends on Asp505, which acts as the Nucleophile; for isomaltase activity. Cys520 and Cys545 are disulfide-bonded. Arg588 contacts substrate. Asp604 (for isomaltase activity) is an active-site residue. Cys635 and Cys646 form a disulfide bridge. His662 contributes to the substrate binding site. Asn859, Asn896, and Asn904 each carry an N-linked (GlcNAc...) asparagine glycan. Residues 932 to 978 form the P-type 2 domain; that stretch reads DQTFLESEKITCYPDADIATQEKCTQRGCIWDTNTVNPRAPECYFPK. A sucrase region spans residues 1008-1827; sequence ITLPSEPITN…LDDPIEISWS (820 aa). N-linked (GlcNAc...) asparagine glycosylation is found at Asn1235, Asn1303, Asn1325, Asn1340, Asn1354, and Asn1368. Sulfotyrosine occurs at positions 1382 and 1385. The Nucleophile; for sucrase activity role is filled by Asp1394. Catalysis depends on Glu1397, which acts as the For sucrase activity. An N-linked (GlcNAc...) asparagine glycan is attached at Asn1403. Asp1500 functions as the Proton donor; for sucrase activity in the catalytic mechanism. N-linked (GlcNAc...) asparagine glycosylation is found at Asn1535, Asn1572, Asn1748, Asn1763, and Asn1799.

The protein belongs to the glycosyl hydrolase 31 family. As to quaternary structure, the resulting sucrase and isomaltase subunits stay associated with one another in a complex by non-covalent linkages. The precursor is proteolytically cleaved when exposed to pancreatic proteases in the intestinal lumen. In terms of processing, N- and O-glycosylated. Post-translationally, sulfated.

Its subcellular location is the apical cell membrane. The catalysed reaction is Hydrolysis of sucrose and maltose by an alpha-D-glucosidase-type action.. It catalyses the reaction Hydrolysis of (1-&gt;6)-alpha-D-glucosidic linkages in some oligosaccharides produced from starch and glycogen by alpha-amylase, and in isomaltose.. Plays an important role in the final stage of carbohydrate digestion. Isomaltase activity is specific for both alpha-1,4- and alpha-1,6-oligosaccharides. The chain is Sucrase-isomaltase, intestinal (SI) from Oryctolagus cuniculus (Rabbit).